The sequence spans 213 residues: Large ribosomal subunit protein uL1 (213 aa).

Belongs to the universal ribosomal protein uL1 family. As to quaternary structure, part of the 50S ribosomal subunit.

Binds directly to 23S rRNA. Probably involved in E site tRNA release. Functionally, protein L1 is also a translational repressor protein, it controls the translation of its operon by binding to its mRNA. This Methanocorpusculum labreanum (strain ATCC 43576 / DSM 4855 / Z) protein is Large ribosomal subunit protein uL1.